Here is a 196-residue protein sequence, read N- to C-terminus: ATP synthase subunit b (196 aa).

Residues 24-44 (PLSELLIGTLSFALLVAFFFW) form a helical membrane-spanning segment.

Belongs to the ATPase B chain family. In terms of assembly, F-type ATPases have 2 components, F(1) - the catalytic core - and F(0) - the membrane proton channel. F(1) has five subunits: alpha(3), beta(3), gamma(1), delta(1), epsilon(1). F(0) has three main subunits: a(1), b(2) and c(10-14). The alpha and beta chains form an alternating ring which encloses part of the gamma chain. F(1) is attached to F(0) by a central stalk formed by the gamma and epsilon chains, while a peripheral stalk is formed by the delta and b chains.

It is found in the cell membrane. In terms of biological role, f(1)F(0) ATP synthase produces ATP from ADP in the presence of a proton or sodium gradient. F-type ATPases consist of two structural domains, F(1) containing the extramembraneous catalytic core and F(0) containing the membrane proton channel, linked together by a central stalk and a peripheral stalk. During catalysis, ATP synthesis in the catalytic domain of F(1) is coupled via a rotary mechanism of the central stalk subunits to proton translocation. Functionally, component of the F(0) channel, it forms part of the peripheral stalk, linking F(1) to F(0). In Frankia casuarinae (strain DSM 45818 / CECT 9043 / HFP020203 / CcI3), this protein is ATP synthase subunit b.